Here is a 462-residue protein sequence, read N- to C-terminus: NEDD8-activating enzyme E1 regulatory subunit (462 aa).

This sequence belongs to the ubiquitin-activating E1 family. ULA1 subfamily. As to quaternary structure, heterodimer of UBA3 and ULA1. The complex binds NEDD8 and UBC12.

The protein operates within protein modification; protein neddylation. In terms of biological role, regulatory subunit of the dimeric UBA3-ULA1 E1 enzyme. E1 activates NEDD8/RUB1 by first adenylating its C-terminal glycine residue with ATP, thereafter linking this residue to the side chain of the catalytic cysteine, yielding a NEDD8-UBA3 thioester and free AMP. E1 finally transfers NEDD8 to the catalytic cysteine of UBC12. The sequence is that of NEDD8-activating enzyme E1 regulatory subunit (ULA1) from Saccharomyces cerevisiae (strain ATCC 204508 / S288c) (Baker's yeast).